The sequence spans 137 residues: Large ribosomal subunit protein uL16 (137 aa).

Over residues 1–17 (MLQPKRTKFRKTHKGRN) the composition is skewed to basic residues. The tract at residues 1 to 24 (MLQPKRTKFRKTHKGRNRGLANTG) is disordered.

Belongs to the universal ribosomal protein uL16 family. Part of the 50S ribosomal subunit.

Functionally, binds 23S rRNA and is also seen to make contacts with the A and possibly P site tRNAs. This chain is Large ribosomal subunit protein uL16, found in Aeromonas salmonicida (strain A449).